Reading from the N-terminus, the 278-residue chain is MDVRQSIHGAHAKTLDTQGLRNEFLVEKVFVADEYTMVYSHIDRIIVGGIMPITKTVSVGGEVGKQLGVSYFLERRELGVINIGGAGTITVDGQCYEIGHRDALYVGKGAKEVVFASIDTATPAKFYYNCAPAHTTYPTKKVTPDEVSPVTLGDNLTSNRRTINKYFVPDVLETCQLSMGLTELAPGNLWNTMPCHTHERRMEVYFYFNMDDDACVFHMMGQPQETRHIVMHNEQAVISPSWSIHSGVGTKAYTFIWGMVGENQVFNDMDHVAVKDLR.

Zn(2+) contacts are provided by His-196, His-198, Glu-203, and His-245.

The protein belongs to the KduI family. Zn(2+) is required as a cofactor.

The catalysed reaction is 5-dehydro-4-deoxy-D-glucuronate = 3-deoxy-D-glycero-2,5-hexodiulosonate. Its pathway is glycan metabolism; pectin degradation; 2-dehydro-3-deoxy-D-gluconate from pectin: step 4/5. Catalyzes the isomerization of 5-dehydro-4-deoxy-D-glucuronate to 3-deoxy-D-glycero-2,5-hexodiulosonate. The sequence is that of 4-deoxy-L-threo-5-hexosulose-uronate ketol-isomerase from Shigella flexneri serotype 5b (strain 8401).